We begin with the raw amino-acid sequence, 294 residues long: Ventral anterior homeobox 2b (294 aa).

The span at Met1–Ser10 shows a compositional bias: basic and acidic residues. Disordered regions lie at residues Met1–Arg27, Lys43–Ser65, Arg149–Thr168, Pro190–Ser223, and Ser272–Ser294. A DNA-binding region (homeobox) is located at residues Pro98–Gln157. Over residues Lys154 to Ser165 the composition is skewed to basic and acidic residues. The segment covering Ser197 to Ser219 has biased composition (low complexity). Residues Thr279 to Ser288 are compositionally biased toward basic and acidic residues.

It belongs to the EMX homeobox family.

It is found in the nucleus. Its function is as follows. Transcription factor that may function in dorsoventral specification of the forebrain. Regulates the expression of Wnt signaling antagonists. In Xenopus laevis (African clawed frog), this protein is Ventral anterior homeobox 2b (vax2-b).